The sequence spans 450 residues: Envelope glycoprotein M (450 aa).

At 1-31 the chain is on the intravirion side; sequence MARRGAAVAEEPLLPSSGIVGIGPIEGINWR. The helical transmembrane segment at 32–52 threads the bilayer; that stretch reads TWLVQVFCFALTTSVLFITLV. Residues 53 to 101 are Virion surface-facing; the sequence is TASLPQTGYPCFYGSLVDYTQKNHSVVDGVWMRQIAGGVAPTLFLETTS. A helical transmembrane segment spans residues 102 to 122; the sequence is LVAFLYYTTLVLVAISFYLII. At 123–153 the chain is on the intravirion side; it reads SAVLVRRYARGKECTAVAGCTRPTTTLIASH. Residues 154–174 form a helical membrane-spanning segment; the sequence is VTLVLGTLATWLLQVVILLLS. At 175-178 the chain is on the virion surface side; the sequence is HKQA. Residues 179-199 traverse the membrane as a helical segment; it reads VLGAAVYVVHFVSLVFFCMSF. Residues 200 to 236 lie on the Intravirion side of the membrane; sequence SGLGTASAQYSSNLRILKTNLPALHKMAGPGRAVMTN. A helical membrane pass occupies residues 237–257; the sequence is LGMGMLGISLPILSLMLGIIL. Over 258 to 270 the chain is Virion surface; it reads ANSFHITLWQTVT. Residues 271-291 form a helical membrane-spanning segment; sequence VAVGVFVALGLMFLIIVELIV. The Intravirion segment spans residues 292 to 294; it reads SHY. The helical transmembrane segment at 295 to 315 threads the bilayer; it reads VHVLVGPALAVLVASSTLAVA. At 316–334 the chain is on the virion surface side; the sequence is THSYFVHFHAMVSVQAPNL. The chain crosses the membrane as a helical span at residues 335–355; that stretch reads ATASKAIVGIMAVISIIMLVV. At 356-450 the chain is on the intravirion side; sequence RLVRAIMFHK…PERSHRREYR (95 aa).

It belongs to the herpesviridae glycoprotein M family. As to quaternary structure, interacts (via N-terminus) with gN (via N-terminus). The gM-gN heterodimer forms the gCII complex.

The protein resides in the virion membrane. It is found in the host Golgi apparatus. Its subcellular location is the host trans-Golgi network. The protein localises to the host endosome membrane. It localises to the host nucleus inner membrane. Functionally, envelope glycoprotein important for virion assembly and egress. Plays a role in the correct incorporation of gH-gL into virion membrane. Directs the glycoprotein N (gN) to the host trans-Golgi network. This is Envelope glycoprotein M from Equus caballus (Horse).